The chain runs to 470 residues: ATP synthase subunit beta (470 aa).

ATP is bound at residue 157–164 (GGAGVGKT).

The protein belongs to the ATPase alpha/beta chains family. As to quaternary structure, F-type ATPases have 2 components, CF(1) - the catalytic core - and CF(0) - the membrane proton channel. CF(1) has five subunits: alpha(3), beta(3), gamma(1), delta(1), epsilon(1). CF(0) has three main subunits: a(1), b(2) and c(9-12). The alpha and beta chains form an alternating ring which encloses part of the gamma chain. CF(1) is attached to CF(0) by a central stalk formed by the gamma and epsilon chains, while a peripheral stalk is formed by the delta and b chains.

The protein resides in the cell inner membrane. The enzyme catalyses ATP + H2O + 4 H(+)(in) = ADP + phosphate + 5 H(+)(out). In terms of biological role, produces ATP from ADP in the presence of a proton gradient across the membrane. The catalytic sites are hosted primarily by the beta subunits. The sequence is that of ATP synthase subunit beta from Geobacter sp. (strain M21).